The primary structure comprises 927 residues: Sodium/calcium exchanger 3 (927 aa).

The first 30 residues, M1–A30, serve as a signal peptide directing secretion. Topologically, residues E31–K73 are extracellular. N45 carries N-linked (GlcNAc...) asparagine glycosylation. Residues I74–I94 form a helical membrane-spanning segment. Residues A95–E147 lie on the Cytoplasmic side of the membrane. Residues A140 to I180 form an Alpha-1 repeat. The chain crosses the membrane as a helical span at residues I148 to S168. Position 169 (T169) is a topological domain, extracellular. Residues I170–P190 traverse the membrane as a helical segment. The Cytoplasmic portion of the chain corresponds to D191–V202. A helical membrane pass occupies residues F203–V223. Topologically, residues F224 to Q230 are extracellular. Residues V231–A251 traverse the membrane as a helical segment. Topologically, residues D252–S726 are cytoplasmic. Residues K253–G272 form a putative calmodulin-binding region region. Calx-beta domains follow at residues V386–S485 and A519–G619. E409, D445, D470, D471, I473, E475, E478, D525, D526, D527, E543, D579, E606, E607, and E672 together coordinate Ca(2+). The chain crosses the membrane as a helical span at residues C727–P747. The Extracellular segment spans residues P748–G754. The chain crosses the membrane as a helical span at residues W755–L775. The Cytoplasmic segment spans residues A776–H778. Residues F779–T799 traverse the membrane as a helical segment. An Alpha-2 repeat occupies A796–V832. At S800 to N828 the chain is on the extracellular side. An N-linked (GlcNAc...) asparagine glycan is attached at N823. The helical transmembrane segment at A829–M849 threads the bilayer. Residues Q850 to T860 lie on the Cytoplasmic side of the membrane. Residues L861–Y881 traverse the membrane as a helical segment. Residues R882–W903 lie on the Extracellular side of the membrane. A helical transmembrane segment spans residues L904–I924. Residues K925–F927 lie on the Cytoplasmic side of the membrane.

This sequence belongs to the Ca(2+):cation antiporter (CaCA) (TC 2.A.19) family. SLC8 subfamily. Interacts with AKAP1. Detected in neurons in brain cortex and hippocampus. Detected in pyramidal cell bodies and processes, in granule cells and interneurons in the CA1 and CA3 region of the hippocampus. Detected on astrocyte processes in brain cortex. Detected on endothelial cells in hippocampus capillaries (at protein level). Restricted to brain and skeletal muscle.

Its subcellular location is the cell membrane. The protein localises to the perikaryon. It is found in the cell projection. It localises to the dendrite. The protein resides in the dendritic spine. Its subcellular location is the sarcolemma. The protein localises to the cytoplasm. It is found in the sarcoplasm. It localises to the cell junction. The protein resides in the mitochondrion outer membrane. Its subcellular location is the endoplasmic reticulum membrane. The protein localises to the perinuclear region. The catalysed reaction is Ca(2+)(in) + 3 Na(+)(out) = Ca(2+)(out) + 3 Na(+)(in). Calcium transport is down-regulated by Na(+) and stimulated by Ca(2+). In terms of biological role, mediates the electrogenic exchange of Ca(2+) against Na(+) ions across the cell membrane, and thereby contributes to the regulation of cytoplasmic Ca(2+) levels and Ca(2+)-dependent cellular processes. Contributes to cellular Ca(2+) homeostasis in excitable cells, both in muscle and in brain. In a first phase, voltage-gated channels mediate the rapid increase of cytoplasmic Ca(2+) levels due to release of Ca(2+) stores from the endoplasmic reticulum. SLC8A3 mediates the export of Ca(2+) from the cell during the next phase, so that cytoplasmic Ca(2+) levels rapidly return to baseline. Contributes to Ca(2+) transport during excitation-contraction coupling in muscle. In neurons, contributes to the rapid decrease of cytoplasmic Ca(2+) levels back to baseline after neuronal activation, and thereby contributes to modulate synaptic plasticity, learning and memory. Required for normal oligodendrocyte differentiation and for normal myelination. Mediates Ca(2+) efflux from mitochondria and contributes to mitochondrial Ca(2+) ion homeostasis. In Rattus norvegicus (Rat), this protein is Sodium/calcium exchanger 3 (Slc8a3).